The chain runs to 78 residues: Large ribosomal subunit protein bL28 (78 aa).

The protein belongs to the bacterial ribosomal protein bL28 family.

The protein is Large ribosomal subunit protein bL28 of Francisella philomiragia subsp. philomiragia (strain ATCC 25017 / CCUG 19701 / FSC 153 / O#319-036).